The primary structure comprises 333 residues: 5-formaminoimidazole-4-carboxamide-1-(beta)-D-ribofuranosyl 5'-monophosphate synthetase (333 aa).

The 5-amino-1-(5-phospho-beta-D-ribosyl)imidazole-4-carboxamide site is built by H10 and S70. Positions 91–324 constitute an ATP-grasp domain; the sequence is KEVLKWESDR…IAREIKIAIE (234 aa). Residues 121-181 and E203 each bind ATP; that span reads PDDI…VPIY. N231 provides a ligand contact to 5-amino-1-(5-phospho-beta-D-ribosyl)imidazole-4-carboxamide. Positions 269 and 282 each coordinate Mg(2+).

This sequence belongs to the phosphohexose mutase family. It depends on Mg(2+) as a cofactor. Mn(2+) serves as cofactor.

It carries out the reaction 5-amino-1-(5-phospho-beta-D-ribosyl)imidazole-4-carboxamide + formate + ATP = 5-formamido-1-(5-phospho-D-ribosyl)imidazole-4-carboxamide + ADP + phosphate. The protein operates within purine metabolism; IMP biosynthesis via de novo pathway; 5-formamido-1-(5-phospho-D-ribosyl)imidazole-4-carboxamide from 5-amino-1-(5-phospho-D-ribosyl)imidazole-4-carboxamide (formate route): step 1/1. In terms of biological role, catalyzes the ATP- and formate-dependent formylation of 5-aminoimidazole-4-carboxamide-1-beta-d-ribofuranosyl 5'-monophosphate (AICAR) to 5-formaminoimidazole-4-carboxamide-1-beta-d-ribofuranosyl 5'-monophosphate (FAICAR) in the absence of folates. This chain is 5-formaminoimidazole-4-carboxamide-1-(beta)-D-ribofuranosyl 5'-monophosphate synthetase, found in Pyrococcus horikoshii (strain ATCC 700860 / DSM 12428 / JCM 9974 / NBRC 100139 / OT-3).